Reading from the N-terminus, the 294-residue chain is 4-hydroxy-tetrahydrodipicolinate synthase (294 aa).

A pyruvate-binding site is contributed by Thr-45. Tyr-133 functions as the Proton donor/acceptor in the catalytic mechanism. Catalysis depends on Lys-162, which acts as the Schiff-base intermediate with substrate. Position 204 (Ile-204) interacts with pyruvate.

This sequence belongs to the DapA family. In terms of assembly, homotetramer; dimer of dimers.

The protein resides in the cytoplasm. It carries out the reaction L-aspartate 4-semialdehyde + pyruvate = (2S,4S)-4-hydroxy-2,3,4,5-tetrahydrodipicolinate + H2O + H(+). It participates in amino-acid biosynthesis; L-lysine biosynthesis via DAP pathway; (S)-tetrahydrodipicolinate from L-aspartate: step 3/4. In terms of biological role, catalyzes the condensation of (S)-aspartate-beta-semialdehyde [(S)-ASA] and pyruvate to 4-hydroxy-tetrahydrodipicolinate (HTPA). This Rhizobium meliloti (strain 1021) (Ensifer meliloti) protein is 4-hydroxy-tetrahydrodipicolinate synthase.